The chain runs to 348 residues: Fe(3+) ions import ATP-binding protein FbpC (348 aa).

In terms of domain architecture, ABC transporter spans 7 to 237 (VELRNVTKRF…PASRFMASFM (231 aa)). Position 39-46 (39-46 (GPSGCGKT)) interacts with ATP.

Belongs to the ABC transporter superfamily. Fe(3+) ion importer (TC 3.A.1.10) family. In terms of assembly, the complex is composed of two ATP-binding proteins (FbpC), two transmembrane proteins (FbpB) and a solute-binding protein (FbpA).

It localises to the cell inner membrane. The catalysed reaction is Fe(3+)(out) + ATP + H2O = Fe(3+)(in) + ADP + phosphate + H(+). In terms of biological role, part of the ABC transporter complex FbpABC involved in Fe(3+) ions import. Responsible for energy coupling to the transport system. The protein is Fe(3+) ions import ATP-binding protein FbpC of Escherichia coli O157:H7.